The primary structure comprises 448 residues: NADP-specific glutamate dehydrogenase (448 aa).

Positions 88, 109, and 112 each coordinate substrate. The Proton donor role is filled by Lys124. Substrate is bound at residue Gly163. NADP(+) is bound by residues Thr207 and Asn238. Ser381 is a substrate binding site.

This sequence belongs to the Glu/Leu/Phe/Val dehydrogenases family. In terms of assembly, homohexamer.

The catalysed reaction is L-glutamate + NADP(+) + H2O = 2-oxoglutarate + NH4(+) + NADPH + H(+). Its function is as follows. Catalyzes the reversible oxidative deamination of glutamate to alpha-ketoglutarate and ammonia. This chain is NADP-specific glutamate dehydrogenase (gdhA), found in Helicobacter pylori (strain ATCC 700392 / 26695) (Campylobacter pylori).